Reading from the N-terminus, the 214-residue chain is MAELLNVKPTRMELLNLKRRITLAKKGHKLLKDKQDALVMEFFTIYDEALRLREELNEKMMEAFKALQRAEIDVGTLRMKEISLSVKPNREVEVKTRNVMGVPVPLIEAESFKRSAGERGYAFVSSSARVDLAAEKFEEVLDLAVRLAEVEETLKRLAKEIEVTKRRVNALEYIIIPRMEATVKFIKQRLDEMERENFFRLKRVKALIEARSGS.

It belongs to the V-ATPase D subunit family. In terms of assembly, has multiple subunits with at least A(3), B(3), C, D, E, F, H, I and proteolipid K(x).

Its subcellular location is the cell membrane. Component of the A-type ATP synthase that produces ATP from ADP in the presence of a proton gradient across the membrane. The sequence is that of A-type ATP synthase subunit D from Thermococcus kodakarensis (strain ATCC BAA-918 / JCM 12380 / KOD1) (Pyrococcus kodakaraensis (strain KOD1)).